We begin with the raw amino-acid sequence, 390 residues long: Queuine tRNA-ribosyltransferase (390 aa).

Residue aspartate 92 is the Proton acceptor of the active site. Residues 92-96, aspartate 146, glutamine 195, and glycine 222 each bind substrate; that span reads DSGGF. The tract at residues 253 to 259 is RNA binding; the sequence is GVGTPED. The Nucleophile role is filled by aspartate 272. The RNA binding; important for wobble base 34 recognition stretch occupies residues 277–281; it reads TRNAR. Zn(2+) is bound by residues cysteine 310, cysteine 312, cysteine 315, and histidine 354.

Belongs to the queuine tRNA-ribosyltransferase family. Homodimer. Within each dimer, one monomer is responsible for RNA recognition and catalysis, while the other monomer binds to the replacement base PreQ1. It depends on Zn(2+) as a cofactor.

The catalysed reaction is 7-aminomethyl-7-carbaguanine + guanosine(34) in tRNA = 7-aminomethyl-7-carbaguanosine(34) in tRNA + guanine. It functions in the pathway tRNA modification; tRNA-queuosine biosynthesis. Functionally, catalyzes the base-exchange of a guanine (G) residue with the queuine precursor 7-aminomethyl-7-deazaguanine (PreQ1) at position 34 (anticodon wobble position) in tRNAs with GU(N) anticodons (tRNA-Asp, -Asn, -His and -Tyr). Catalysis occurs through a double-displacement mechanism. The nucleophile active site attacks the C1' of nucleotide 34 to detach the guanine base from the RNA, forming a covalent enzyme-RNA intermediate. The proton acceptor active site deprotonates the incoming PreQ1, allowing a nucleophilic attack on the C1' of the ribose to form the product. After dissociation, two additional enzymatic reactions on the tRNA convert PreQ1 to queuine (Q), resulting in the hypermodified nucleoside queuosine (7-(((4,5-cis-dihydroxy-2-cyclopenten-1-yl)amino)methyl)-7-deazaguanosine). The chain is Queuine tRNA-ribosyltransferase from Acidovorax ebreus (strain TPSY) (Diaphorobacter sp. (strain TPSY)).